The chain runs to 121 residues: Basic phospholipase A2 BmjeTX-II (121 aa).

7 disulfides stabilise this stretch: C26–C114, C28–C45, C44–C95, C50–C121, C51–C88, C58–C82, and C76–C86. Ca(2+) is bound by residues Y27, G29, and G31. H48 is an active-site residue. D49 lines the Ca(2+) pocket. Residue D89 is part of the active site.

It depends on Ca(2+) as a cofactor. In terms of tissue distribution, expressed by the venom gland.

It is found in the secreted. The enzyme catalyses a 1,2-diacyl-sn-glycero-3-phosphocholine + H2O = a 1-acyl-sn-glycero-3-phosphocholine + a fatty acid + H(+). Snake venom phospholipase A2 (PLA2) that induces blockade of neuromuscular contraction in an indirectly stimulated chick biventer cervicis nerve-muscle preparation. Does not inhibit contraction of chick biventer cervicic nerve-muscle preparation in response to treatment with acetylcholine or KCl. The neuromuscular blockade is mediated by inhibitory action at the presynaptic motor nerve endings. Lyses skeletal myoblasts and myotubes in vitro, and intramuscular injection causes local muscle necrosis. Induces edema in the mouse foot pad. Induces a transient increase of IL-6 levels. PLA2 catalyzes the calcium-dependent hydrolysis of the 2-acyl groups in 3-sn-phosphoglycerides. The chain is Basic phospholipase A2 BmjeTX-II from Bothrops marajoensis (Marajo lancehead).